The following is a 239-amino-acid chain: Ribosomal RNA small subunit methyltransferase G (239 aa).

S-adenosyl-L-methionine contacts are provided by residues Gly78, Phe83, 129-130 (AE), and Arg148.

Belongs to the methyltransferase superfamily. RNA methyltransferase RsmG family.

Its subcellular location is the cytoplasm. Its function is as follows. Specifically methylates the N7 position of a guanine in 16S rRNA. This Clostridium beijerinckii (strain ATCC 51743 / NCIMB 8052) (Clostridium acetobutylicum) protein is Ribosomal RNA small subunit methyltransferase G.